The following is a 712-amino-acid chain: Cyclomaltodextrin glucanotransferase (712 aa).

The first 27 residues, 1–27 (MKRFMKLTAVWTLWLSLTLGLLSPVHA), serve as a signal peptide directing secretion. The interval 28-165 (APDTSVSNKQ…NIKVIIDFAP (138 aa)) is A1. Ca(2+) contacts are provided by Asp-54, Asn-56, Asn-59, and Asn-60. The cysteines at positions 70 and 77 are disulfide-linked. Residues Gly-78 and Asp-80 each coordinate Ca(2+). 127–128 (YW) contributes to the substrate binding site. Residue Asn-166 coordinates Ca(2+). The b stretch occupies residues 166 to 229 (NHTSPASSDD…NLYDLADLNH (64 aa)). Residue His-167 coordinates substrate. Ca(2+) is bound at residue Ile-217. 220 to 223 (NLYD) contacts substrate. Position 226 (Asp-226) interacts with Ca(2+). The tract at residues 230 to 433 (NNSSVDVYLK…LRKSNPAIAY (204 aa)) is A2. Arg-254 provides a ligand contact to substrate. The active-site Nucleophile is the Asp-256. A substrate-binding site is contributed by 259–260 (KH). His-260 is a binding site for Ca(2+). Glu-284 (proton donor) is an active-site residue. Substrate-binding residues include His-354, Asp-398, and Arg-402. The c stretch occupies residues 434 to 522 (GSTQERWINN…GTAVWQYTTD (89 aa)). The segment at 523–608 (ATAPINGNVG…SNIYDNFEVL (86 aa)) is d. The region spanning 526-606 (PINGNVGPMM…AASNIYDNFE (81 aa)) is the IPT/TIG domain. The region spanning 607–712 (VLTGDQVTVR…TATVNVNWQP (106 aa)) is the CBM20 domain. Residues 609-712 (TGDQVTVRFV…TATVNVNWQP (104 aa)) form an e region.

Belongs to the glycosyl hydrolase 13 family. Monomer. Ca(2+) is required as a cofactor.

The protein localises to the secreted. The enzyme catalyses Cyclizes part of a (1-&gt;4)-alpha-D-glucan chain by formation of a (1-&gt;4)-alpha-D-glucosidic bond.. The polypeptide is Cyclomaltodextrin glucanotransferase (cgt) (Bacillus sp. (strain 38-2)).